Here is a 279-residue protein sequence, read N- to C-terminus: Aquaporin A (279 aa).

The Cytoplasmic segment spans residues 1-40 (MVKVVPLRFITYDPLKDPSKMIYRRPISKPVKAFKGFFSE). The helical transmembrane segment at 41–61 (FLGTLYLVYFCGGSVCAAFAV) threads the bilayer. At 62 to 69 (AGDSAARA) the chain is on the extracellular side. The helical transmembrane segment at 70–90 (LLGGLIQGMALAALIWAVSGV) threads the bilayer. Residues 91 to 114 (SGCNLNPAVTLANLLSGRVGLIDS) lie on the Cytoplasmic side of the membrane. The NPA 1 motif lies at 96–98 (NPA). The chain crosses the membrane as a helical span at residues 115-135 (LYYVAAQILGCIAGAGILYGC). Residues 136 to 158 (LPNMYRIDLGVPHLAPGMNTGQA) are Extracellular-facing. The chain crosses the membrane as a helical span at residues 159–179 (FLMEMMLTSILCLCVLGTSVF). Over 180–188 (NVWDRRLNR) the chain is Cytoplasmic. Residues 189-209 (IAPFAIGLALFIGVAIGFNFS) form a helical membrane-spanning segment. Over 210 to 227 (GGALNPVRVLGPSIISGV) the chain is Extracellular. An NPA 2 motif is present at residues 214-216 (NPV). Residues 228 to 248 (WSHHWVYWLGPIVGAILAAFI) form a helical membrane-spanning segment. The Cytoplasmic portion of the chain corresponds to 249 to 279 (YRCLLQERFDVIERPGYIAPLIDPSTAVSSY).

It belongs to the MIP/aquaporin (TC 1.A.8) family.

It localises to the cell membrane. Its function is as follows. May form a water-specific channel. Required for prolonged spore survival on fruiting bodies. This Dictyostelium discoideum (Social amoeba) protein is Aquaporin A (aqpA).